We begin with the raw amino-acid sequence, 690 residues long: Elongation factor G (690 aa).

Residues 8 to 282 (DKVRNIGIMA…AIVNYLPSPL (275 aa)) form the tr-type G domain. Residues 17–24 (AHIDAGKT), 81–85 (DTPGH), and 135–138 (NKMD) contribute to the GTP site.

It belongs to the TRAFAC class translation factor GTPase superfamily. Classic translation factor GTPase family. EF-G/EF-2 subfamily.

Its subcellular location is the cytoplasm. Functionally, catalyzes the GTP-dependent ribosomal translocation step during translation elongation. During this step, the ribosome changes from the pre-translocational (PRE) to the post-translocational (POST) state as the newly formed A-site-bound peptidyl-tRNA and P-site-bound deacylated tRNA move to the P and E sites, respectively. Catalyzes the coordinated movement of the two tRNA molecules, the mRNA and conformational changes in the ribosome. The polypeptide is Elongation factor G (Caldanaerobacter subterraneus subsp. tengcongensis (strain DSM 15242 / JCM 11007 / NBRC 100824 / MB4) (Thermoanaerobacter tengcongensis)).